A 33-amino-acid polypeptide reads, in one-letter code: Rugosin-A (33 aa).

A disulfide bridge links cysteine 27 with cysteine 33.

This sequence belongs to the frog skin active peptide (FSAP) family. Brevinin subfamily. In terms of tissue distribution, expressed by the skin glands.

It localises to the secreted. Has antibacterial activity against Gram-positive bacteria. This is Rugosin-A from Glandirana rugosa (Japanese wrinkled frog).